Here is an 878-residue protein sequence, read N- to C-terminus: Pyruvate, phosphate dikinase (878 aa).

An N-terminal region spans residues 1-347; it reads MKKLIYYFGS…LYILQTRTAK (347 aa). Residue R96 coordinates ATP. The tract at residues 348–404 is linker 1; the sequence is RTAIAAINIAVQMVEEKLISKEQALMRIDPESLNQLLHTRIDYSKGLTSIAEGLPAS. The tract at residues 405-502 is central; sequence PGAATGIAVF…VIKQGDIITI (98 aa). T457 is subject to Phosphothreonine; by PDRP1. Residue H459 is the Tele-phosphohistidine intermediate of the active site. A linker 2 region spans residues 503–537; the sequence is DGGSGKIFLGEMPLIQPTFSEESKLILDWADEISS. The C-terminal stretch occupies residues 538 to 878; the sequence is LKVRANAETV…AAAQAKIKHG (341 aa). Residues R565, R621, E749, G770, T771, N772, and D773 each coordinate substrate. E749 contributes to the Mg(2+) binding site. D773 contacts Mg(2+). C835 serves as the catalytic Proton donor.

It belongs to the PEP-utilizing enzyme family. In terms of assembly, homodimer. Mg(2+) serves as cofactor. In terms of processing, phosphorylation of Thr-457 in the dark inactivates the enzyme. Dephosphorylation upon light stimulation reactivates the enzyme.

It carries out the reaction pyruvate + phosphate + ATP = phosphoenolpyruvate + AMP + diphosphate + H(+). With respect to regulation, activated by light-induced dephosphorylation. Inhibited by dark-induced phosphorylation. Both reactions are catalyzed by PDRP1. Its function is as follows. Catalyzes the reversible phosphorylation of pyruvate and phosphate. This is Pyruvate, phosphate dikinase (ppdK) from Rickettsia conorii (strain ATCC VR-613 / Malish 7).